Reading from the N-terminus, the 56-residue chain is Large ribosomal subunit protein bL33 (56 aa).

It belongs to the bacterial ribosomal protein bL33 family.

This chain is Large ribosomal subunit protein bL33, found in Glaesserella parasuis serovar 5 (strain SH0165) (Haemophilus parasuis).